A 1591-amino-acid polypeptide reads, in one-letter code: GATOR1 complex protein DEPDC5 (1591 aa).

3 disordered regions span residues 427-455 (GKKSASEKTKNGRDTSLGTPKESENTLPI), 478-532 (LATC…STNI), and 695-720 (LSNSSTGVNPRTQNKDSLEDSVSTSP). Residues 430 to 439 (SASEKTKNGR) show a composition bias toward basic and acidic residues. Residues 494–508 (SASSCDVSSSPSLPS) are compositionally biased toward low complexity. S505 is modified (phosphoserine). A compositionally biased stretch (polar residues) spans 518–532 (SQASDDSSLGKSTNI). Phosphoserine is present on S992. Disordered regions lie at residues 1040–1064 (SQKSLGEQQTTVHGKSSTQPAENSS) and 1118–1153 (STGQPMDRGNNQTFGNSQNIEQAFPSANSGDYSSQQ). Over residues 1118-1149 (STGQPMDRGNNQTFGNSQNIEQAFPSANSGDY) the composition is skewed to polar residues. A DEP domain is found at 1175-1250 (PSTGVQLLSE…YGFYFYKIVM (76 aa)). Position 1518 is a phosphoserine (S1518).

The protein belongs to the IML1 family. Within the GATOR complex, component of the GATOR1 subcomplex, made of DEPDC5, NPRL2 and NPRL3. GATOR1 mediates the strong interaction of the GATOR complex with small GTPases Rag (RagA/RRAGA, RagB/RRAGB, RagC/RRAGC and/or RagD/RRAGD) heterodimers. GATOR1 interacts with GPR155/LYCHOS; interaction takes place in presence of cholesterol and prevents interaction between GATOR1 and KICSTOR. Interacts with SAMTOR; interaction is direct and takes place in presence of methionine, leading to inhibit the activity of the GATOR1 complex. In terms of processing, phosphorylation at Ser-992 and Ser-1518 by AKT1 and PIM1 inhibit the activity of DEPDC5, releasing inhibition of the mTORC1 pathway. Post-translationally, ubiquitinated. Amino acid-induced 'Lys-48'-linked polyubiquitination of DEPDC5 by the BCR(KLHL22) ubiquitin ligase complex leads to DEPDC5 proteasomal degradation and inhibition of the GATOR1 complex. Ubiquitination may occur at multiple lysines. As to expression, expressed at low levels in all brain regions. Expressed throughout brain development, including in midgestation embryonic head (11.5 dpc), neonatal brain and whole adult brain. Present in neurons and absent in non-neuronal cells, including astrocytes (at protein level).

It localises to the lysosome membrane. The protein resides in the cytoplasm. The protein localises to the cytosol. It is found in the perinuclear region. Functionally, as a component of the GATOR1 complex functions as an inhibitor of the amino acid-sensing branch of the mTORC1 pathway. In response to amino acid depletion, the GATOR1 complex has GTPase activating protein (GAP) activity and strongly increases GTP hydrolysis by RagA/RRAGA (or RagB/RRAGB) within heterodimeric Rag complexes, thereby turning them into their inactive GDP-bound form, releasing mTORC1 from lysosomal surface and inhibiting mTORC1 signaling. In the presence of abundant amino acids, the GATOR1 complex is negatively regulated by GATOR2, the other GATOR subcomplex, in this amino acid-sensing branch of the TORC1 pathway. Within the GATOR1 complex, DEPDC5 mediates direct interaction with the nucleotide-binding pocket of small GTPases Rag (RagA/RRAGA, RagB/RRAGB, RagC/RRAGC and/or RagD/RRAGD) and coordinates their nucleotide loading states by promoting RagA/RRAGA or RagB/RRAGB into their GDP-binding state and RagC/RRAGC or RagD/RRAGD into their GTP-binding state. However, it does not execute the GAP activity, which is mediated by NPRL2. This is GATOR1 complex protein DEPDC5 from Mus musculus (Mouse).